The sequence spans 285 residues: MKKNIITSITSLALVAGLSLTAFAATTATVPAPPAKQESKPAVAANPAPKNVLFQYSTINALMLGQFEGDLTLKDLKLRGDMGLGTINDLDGEMIQMGTKFYQIDSTGKLSELPESVKTPFAVTTHFEPKEKTTLTNVQDYNQLTKMLEEKFENKNVFYAVKLTGTFKMVKARTVPKQTRPYPQLTEVTKKQSEFEFKNVKGTLIGFYTPNYAAALNVPGFHLHFITEDKTSGGHVLNLQFDNANLEISPIHEFDVQLPHTDDFAHSDLTQVTTSQVHQAESERK.

The signal sequence occupies residues 1–25 (MKKNIITSITSLALVAGLSLTAFAA).

Belongs to the alpha-acetolactate decarboxylase family.

The enzyme catalyses (2S)-2-acetolactate + H(+) = (R)-acetoin + CO2. The protein operates within polyol metabolism; (R,R)-butane-2,3-diol biosynthesis; (R,R)-butane-2,3-diol from pyruvate: step 2/3. In terms of biological role, converts acetolactate into acetoin, which can be excreted by the cells. This may be a mechanism for controlling the internal pH of cells in the stationary stage. In Brevibacillus brevis (Bacillus brevis), this protein is Alpha-acetolactate decarboxylase (aldB).